Reading from the N-terminus, the 90-residue chain is Probable Fe(2+)-trafficking protein (90 aa).

This sequence belongs to the Fe(2+)-trafficking protein family.

Functionally, could be a mediator in iron transactions between iron acquisition and iron-requiring processes, such as synthesis and/or repair of Fe-S clusters in biosynthetic enzymes. The polypeptide is Probable Fe(2+)-trafficking protein (Xylella fastidiosa (strain M23)).